A 119-amino-acid polypeptide reads, in one-letter code: Large ribosomal subunit protein bL20 (119 aa).

Belongs to the bacterial ribosomal protein bL20 family.

Binds directly to 23S ribosomal RNA and is necessary for the in vitro assembly process of the 50S ribosomal subunit. It is not involved in the protein synthesizing functions of that subunit. In Dechloromonas aromatica (strain RCB), this protein is Large ribosomal subunit protein bL20.